Here is a 239-residue protein sequence, read N- to C-terminus: Probable 2-phosphosulfolactate phosphatase (239 aa).

This sequence belongs to the ComB family. It depends on Mg(2+) as a cofactor.

The catalysed reaction is (2R)-O-phospho-3-sulfolactate + H2O = (2R)-3-sulfolactate + phosphate. This Clostridium botulinum (strain Langeland / NCTC 10281 / Type F) protein is Probable 2-phosphosulfolactate phosphatase.